Here is a 37-residue protein sequence, read N- to C-terminus: Large ribosomal subunit protein bL36 (37 aa).

It belongs to the bacterial ribosomal protein bL36 family.

The sequence is that of Large ribosomal subunit protein bL36 from Sulfurovum sp. (strain NBC37-1).